We begin with the raw amino-acid sequence, 405 residues long: Argininosuccinate synthase (405 aa).

ATP-binding positions include 10–18 (AYSGGLDTS) and alanine 37. L-citrulline is bound by residues tyrosine 88 and serine 93. Residue glycine 118 participates in ATP binding. The L-aspartate site is built by threonine 120, asparagine 124, and aspartate 125. Asparagine 124 provides a ligand contact to L-citrulline. Residues arginine 128, serine 179, serine 188, glutamate 264, and tyrosine 276 each contribute to the L-citrulline site.

This sequence belongs to the argininosuccinate synthase family. Type 1 subfamily. As to quaternary structure, homotetramer.

The protein localises to the cytoplasm. It catalyses the reaction L-citrulline + L-aspartate + ATP = 2-(N(omega)-L-arginino)succinate + AMP + diphosphate + H(+). It functions in the pathway amino-acid biosynthesis; L-arginine biosynthesis; L-arginine from L-ornithine and carbamoyl phosphate: step 2/3. This Pseudomonas syringae pv. syringae (strain B728a) protein is Argininosuccinate synthase.